Here is a 327-residue protein sequence, read N- to C-terminus: uncharacterized protein (327 aa).

A disordered region spans residues Pro12 to Pro31. The next 2 helical transmembrane spans lie at Val183–Leu203 and Val292–Met312.

The protein resides in the membrane. This is an uncharacterized protein from Arabidopsis thaliana (Mouse-ear cress).